Reading from the N-terminus, the 1475-residue chain is Peroxidasin homolog (1475 aa).

The N-terminal stretch at 1–23 (MAVRPTRRCLLALLLCFAWWAMA) is a signal peptide. In terms of domain architecture, LRRNT spans 24–60 (VVASKQGAGCPSRCLCFRTTVRCMHLLLEAVPAVAPQ). Disulfide bonds link cysteine 33–cysteine 39 and cysteine 37–cysteine 46. 6 LRR repeats span residues 58–81 (APQT…AFRR), 82–105 (LRSL…AFED), 107–129 (ENLK…AFKG), 130–153 (LASL…SFQH), 154–177 (LPKL…TFSQ), and 179–201 (ESMK…LWLA). The region spanning 189–241 (NALHCDCEILWLADLLKTYAQSGNAQAAATCEYPRRIQGRSVATITPEELNCE) is the LRRCT domain. Cystine bridges form between cysteine 193/cysteine 240, cysteine 195/cysteine 219, cysteine 264/cysteine 314, cysteine 360/cysteine 409, cysteine 451/cysteine 499, and cysteine 543/cysteine 591. Ig-like C2-type domains are found at residues 243–329 (PRIT…QEVT), 339–425 (PTFV…AFII), 430–517 (PQFT…LTVQ), and 518–607 (PRVT…MVLS). Residue asparagine 387 is glycosylated (N-linked (GlcNAc...) asparagine). Residues 402 to 425 (SDSGEYTCFASNSVDSIHATAFII) form an LRR 7 repeat. Residues asparagine 637, asparagine 696, asparagine 716, and asparagine 728 are each glycosylated (N-linked (GlcNAc...) asparagine). Intrachain disulfides connect cysteine 720–cysteine 882, cysteine 729–cysteine 745, cysteine 844–cysteine 854, and cysteine 848–cysteine 872. Residue aspartate 823 participates in heme b binding. Histidine 824 acts as the Proton acceptor in catalysis. Aspartate 825 contributes to the Ca(2+) binding site. Residues threonine 904, tyrosine 906, aspartate 908, and serine 910 each coordinate Ca(2+). A disulfide bond links cysteine 956 and cysteine 967. A glycan (N-linked (GlcNAc...) asparagine) is linked at asparagine 961. Heme b is bound by residues glutamate 977 and histidine 1071. One copy of the LRR 8 repeat lies at 1148-1172 (ALDLAAINIQRGRDHGIPPYHDYRV). Tyrosine 1173 is subject to Phosphotyrosine. Cystine bridges form between cysteine 1174/cysteine 1231 and cysteine 1272/cysteine 1298. Asparagine 1175 carries an N-linked (GlcNAc...) asparagine glycan. Serine 1177 is subject to Phosphoserine. An LRR 9 repeat occupies 1267–1288 (LARILCDNSDNITRVQQDVFRV). N-linked (GlcNAc...) asparagine glycans are attached at residues asparagine 1277 and asparagine 1364. The segment at 1312 to 1407 (CCEDCRTRGQ…QINSLESRLS (96 aa)) is required in homotrimerization. The VWFC domain occupies 1409–1467 (TECVDDSGESHGGNTKWKKDPCTVCECKNGQITCFVEACQPAACPQPVKVEGACCPVCL).

It belongs to the peroxidase family. XPO subfamily. In terms of assembly, homotrimer; disulfide-linked. The homotrimer form is predominant. Homooligomer; disulfide-linked. Oligomerization occurs intracellularly before C-terminal proteolytic cleavage. Interacts with PXDNL; this interaction inhibits the peroxidase activity of PXDN. Ca(2+) is required as a cofactor. Requires heme b as cofactor. Processed by FURIN and the proteolytic processing largely depends on the peroxidase activity of PXDN. The proteolytic cleavage occurs after intracellular homotrimerization and releases into the extracellular matrix a large, catalytically active fragment and a smaller fragment consisting primarily of the C-terminal VWFC domain. The processing enhances both peroxidase activity and sulfilimine cross-links formation. Highly expressed in the cardiovascular system. In the embryo, expressed in the corneal epithelial layer. In the adult eyes, expressed in the corneal and lens epithelium. Expressed in lung.

It localises to the secreted. Its subcellular location is the extracellular space. The protein resides in the extracellular matrix. The protein localises to the endoplasmic reticulum. It is found in the cell surface. It localises to the basement membrane. It catalyses the reaction L-lysyl-[collagen] + L-methionyl-[collagen] + H2O2 = [collagen]-L-lysyl-N-S-L-methionyl-[collagen] + 2 H2O + H(+). It carries out the reaction bromide + H2O2 = hypobromite + H2O. The catalysed reaction is L-lysyl-[collagen] + L-methionyl-[collagen] + hypobromite = [collagen]-L-lysyl-N-S-L-methionyl-[collagen] + bromide + H2O + H(+). The enzyme catalyses (5R)-5-hydroxy-L-lysyl-[collagen] + L-methionyl-[collagen] + hypobromite = [collagen]-(5R)-5-hydroxy-L-lysyl-N-S-L-methionyl-[collagen] + bromide + H2O + H(+). It catalyses the reaction (5R)-5-hydroxy-L-lysyl-[collagen] + L-methionyl-[collagen] + H2O2 = [collagen]-(5R)-5-hydroxy-L-lysyl-N-S-L-methionyl-[collagen] + 2 H2O + H(+). It carries out the reaction L-tyrosyl-[protein] + bromide + H2O2 + H(+) = 3-bromo-L-tyrosyl-[protein] + 2 H2O. The catalysed reaction is hypobromite + L-tyrosyl-[protein] + H(+) = 3-bromo-L-tyrosyl-[protein] + H2O. With respect to regulation, thiocyanate inhibits the formation of 3-bromotyrosine. Functionally, catalyzes the two-electron oxidation of bromide by hydrogen peroxide and generates hypobromite as a reactive intermediate which mediates the formation of sulfilimine cross-links between methionine and hydroxylysine residues within an uncross-linked collagen IV/COL4A1 NC1 hexamer. In turns, directly contributes to the collagen IV network-dependent fibronectin/FN and laminin assembly, which is required for full extracellular matrix (ECM)-mediated signaling. Thus, sulfilimine cross-links are essential for growth factor-induced cell proliferation and survival in endothelial cells, an event essential to basement membrane integrity. In addition, through the bromide oxidation, may promote tubulogenesis and induce angiogenesis through ERK1/2, Akt, and FAK pathways. Moreover brominates alpha2 collagen IV chain/COL4A2 at 'Tyr-1480' and leads to bromine enrichment of the basement membranes. In vitro, can also catalyze the two-electron oxidation of thiocyanate and iodide and these two substrates could effectively compete with bromide and thus inhibit the formation of sulfilimine bonds. Binds laminins. May play a role in the organization of eyeball structure and lens development during eye development. The polypeptide is Peroxidasin homolog (Mus musculus (Mouse)).